Here is a 363-residue protein sequence, read N- to C-terminus: Phospho-N-acetylmuramoyl-pentapeptide-transferase (363 aa).

A run of 9 helical transmembrane segments spans residues 13–33 (ISGI…AFFL), 49–69 (LPLL…IPLL), 95–115 (MGGI…SNFA), 119–139 (LAVS…DWQI), 154–174 (LALQ…NQPS), 183–203 (WVSF…FVLV), 224–244 (AIAL…LMVF), 281–301 (AVAL…IFFV), and 343–363 (ELQV…ICLA).

This sequence belongs to the glycosyltransferase 4 family. MraY subfamily. The cofactor is Mg(2+).

The protein localises to the cell inner membrane. The catalysed reaction is UDP-N-acetyl-alpha-D-muramoyl-L-alanyl-gamma-D-glutamyl-meso-2,6-diaminopimeloyl-D-alanyl-D-alanine + di-trans,octa-cis-undecaprenyl phosphate = di-trans,octa-cis-undecaprenyl diphospho-N-acetyl-alpha-D-muramoyl-L-alanyl-D-glutamyl-meso-2,6-diaminopimeloyl-D-alanyl-D-alanine + UMP. The protein operates within cell wall biogenesis; peptidoglycan biosynthesis. Catalyzes the initial step of the lipid cycle reactions in the biosynthesis of the cell wall peptidoglycan: transfers peptidoglycan precursor phospho-MurNAc-pentapeptide from UDP-MurNAc-pentapeptide onto the lipid carrier undecaprenyl phosphate, yielding undecaprenyl-pyrophosphoryl-MurNAc-pentapeptide, known as lipid I. This is Phospho-N-acetylmuramoyl-pentapeptide-transferase from Nostoc punctiforme (strain ATCC 29133 / PCC 73102).